An 864-amino-acid chain; its full sequence is Translation initiation factor IF-2 (864 aa).

Positions 140 to 171 are enriched in basic and acidic residues; that stretch reads DSRSLNTKKENKLKISNKDEQNKKFNQHRESN. Positions 140-179 are disordered; sequence DSRSLNTKKENKLKISNKDEQNKKFNQHRESNSFDLNHKK. The tr-type G domain maps to 364–533; that stretch reads IRAPVVTIMG…LLQAEMLELK (170 aa). Positions 373–380 are G1; sequence GHVDHGKT. 373-380 is a GTP binding site; sequence GHVDHGKT. Residues 398–402 form a G2 region; the sequence is GITQN. The segment at 419 to 422 is G3; sequence DTPG. GTP contacts are provided by residues 419 to 423 and 473 to 476; these read DTPGH and NKID. The G4 stretch occupies residues 473–476; the sequence is NKID. The G5 stretch occupies residues 509–511; that stretch reads SAK.

The protein belongs to the TRAFAC class translation factor GTPase superfamily. Classic translation factor GTPase family. IF-2 subfamily.

It localises to the cytoplasm. Its function is as follows. One of the essential components for the initiation of protein synthesis. Protects formylmethionyl-tRNA from spontaneous hydrolysis and promotes its binding to the 30S ribosomal subunits. Also involved in the hydrolysis of GTP during the formation of the 70S ribosomal complex. The sequence is that of Translation initiation factor IF-2 from Buchnera aphidicola subsp. Acyrthosiphon pisum (strain 5A).